A 356-amino-acid polypeptide reads, in one-letter code: Glucose 1-dehydrogenase 2 (356 aa).

Aspartate 38 contributes to the Zn(2+) binding site. Serine 40 is a substrate binding site. Positions 64 and 65 each coordinate Zn(2+). The substrate site is built by glutamate 114 and glutamate 150. A Zn(2+)-binding site is contributed by glutamate 150. Residues asparagine 181–leucine 184, arginine 206–arginine 207, and valine 301–asparagine 303 contribute to the NADP(+) site. Asparagine 303 contacts substrate.

Belongs to the zinc-containing alcohol dehydrogenase family. Glucose 1-dehydrogenase subfamily. Zn(2+) serves as cofactor.

It carries out the reaction D-glucose + NAD(+) = D-glucono-1,5-lactone + NADH + H(+). The catalysed reaction is D-glucose + NADP(+) = D-glucono-1,5-lactone + NADPH + H(+). Catalyzes the NAD(P)(+)-dependent oxidation of D-glucose to D-gluconate via gluconolactone. Can utilize both NAD(+) and NADP(+) as electron acceptor. Is involved in the degradation of glucose through a modified Entner-Doudoroff pathway. The sequence is that of Glucose 1-dehydrogenase 2 from Haloterrigena turkmenica (strain ATCC 51198 / DSM 5511 / JCM 9101 / NCIMB 13204 / VKM B-1734 / 4k) (Halococcus turkmenicus).